Here is a 317-residue protein sequence, read N- to C-terminus: EMP1 trafficking protein-7 (317 aa).

Residues 1-32 (MAKDSQKNLNVSNNNNVQCTMGRSSQNINKSD) form a disordered region. Residues 8–17 (NLNVSNNNNV) are compositionally biased toward low complexity. Residues 18–30 (QCTMGRSSQNINK) are compositionally biased toward polar residues. Residues 86-90 (KSLAE) carry the PEXEL motif motif. A helical membrane pass occupies residues 230–250 (VLNALLPFIFIAFVYCTITML). Positions 265-317 (KILKMHYDYKHKENNNNNNNNNNNNNNNNNNNNNNNNNNNNNNNNNNKKSKKN) are essential for its function. Residues 277–317 (ENNNNNNNNNNNNNNNNNNNNNNNNNNNNNNNNNNKKSKKN) are disordered. The span at 279 to 311 (NNNNNNNNNNNNNNNNNNNNNNNNNNNNNNNNN) shows a compositional bias: low complexity.

May interact with MESA. May interact with J-dot compartment protein PF3D7_0801000.

It localises to the host cytoplasm. The protein resides in the vesicle. It is found in the membrane. Its function is as follows. During the asexual blood stage, plays an essential role in the recruitment and/or formation of EMP1-containing vesicles at the Maurer's clefts and their subsequent transfer to the host erythrocyte cell membrane. The sequence is that of EMP1 trafficking protein-7 from Plasmodium falciparum (isolate 3D7).